We begin with the raw amino-acid sequence, 89 residues long: Endoribonuclease VapD 1 (89 aa).

The protein belongs to the VapD ribonuclease family. Homodimer.

In terms of biological role, cleaves ssRNA, mostly between U:A. This chain is Endoribonuclease VapD 1, found in Riemerella anatipestifer (Moraxella anatipestifer).